Reading from the N-terminus, the 922-residue chain is Centrosomal protein of 104 kDa (922 aa).

Residues 210–277 adopt a coiled-coil conformation; it reads EVAQIIRRLD…DLAKEKKQQM (68 aa). Over residues 307-318 the composition is skewed to low complexity; sequence PLQPLASPSSPQ. Disordered stretches follow at residues 307-333 and 348-419; these read PLQP…EELA and LASS…PLTE. The span at 396 to 407 shows a compositional bias: basic and acidic residues; the sequence is PEVREADSDVRR. HEAT repeat units lie at residues 526 to 564 and 601 to 637; these read AIPL…LQLI and GFTV…YRQH. 2 stretches are compositionally biased toward basic and acidic residues: residues 673–697 and 714–725; these read TEAE…EETK and QEKENEAVKLKN. Disordered regions lie at residues 673-741 and 880-922; these read TEAE…TPEI and PAPQ…HTRR. Positions 678 to 705 form a coiled coil; it reads KTQKRVVTKEAEKQKKEETKALQGLSAA.

Interacts with CCP110 and CEP97. Interacts with ARMC9, TOGARAM1, CCDC66 and CSPP1. Expressed predominantly in the brain. Also detected, although at much lower levels, in the heart and the liver. Within the brain, expressed in the cerebral cortex, hippocampus, cerebellum and brainstem.

It localises to the cell projection. Its subcellular location is the cilium. It is found in the cytoplasm. The protein resides in the cytoskeleton. The protein localises to the microtubule organizing center. It localises to the centrosome. Its subcellular location is the centriole. It is found in the spindle pole. Functionally, required for ciliogenesis and for structural integrity at the ciliary tip. This is Centrosomal protein of 104 kDa (Cep104) from Rattus norvegicus (Rat).